A 492-amino-acid chain; its full sequence is Ketol-acid reductoisomerase (NADP(+)) (492 aa).

Positions 14-208 (LDQLGKCRFM…GGHRAGVLQS (195 aa)) constitute a KARI N-terminal Rossmann domain. Residues 45–48 (CGAQ), R68, R76, S78, and 108–110 (DKQ) each bind NADP(+). H132 is an active-site residue. Residue G158 coordinates NADP(+). 2 consecutive KARI C-terminal knotted domains span residues 209 to 344 (SFVA…NAPQ) and 345 to 485 (FDGK…MKDM). Mg(2+) is bound by residues D217, E221, E389, and E393. S414 serves as a coordination point for substrate.

Belongs to the ketol-acid reductoisomerase family. The cofactor is Mg(2+).

The enzyme catalyses (2R)-2,3-dihydroxy-3-methylbutanoate + NADP(+) = (2S)-2-acetolactate + NADPH + H(+). It catalyses the reaction (2R,3R)-2,3-dihydroxy-3-methylpentanoate + NADP(+) = (S)-2-ethyl-2-hydroxy-3-oxobutanoate + NADPH + H(+). It participates in amino-acid biosynthesis; L-isoleucine biosynthesis; L-isoleucine from 2-oxobutanoate: step 2/4. The protein operates within amino-acid biosynthesis; L-valine biosynthesis; L-valine from pyruvate: step 2/4. Its function is as follows. Involved in the biosynthesis of branched-chain amino acids (BCAA). Catalyzes an alkyl-migration followed by a ketol-acid reduction of (S)-2-acetolactate (S2AL) to yield (R)-2,3-dihydroxy-isovalerate. In the isomerase reaction, S2AL is rearranged via a Mg-dependent methyl migration to produce 3-hydroxy-3-methyl-2-ketobutyrate (HMKB). In the reductase reaction, this 2-ketoacid undergoes a metal-dependent reduction by NADPH to yield (R)-2,3-dihydroxy-isovalerate. This Pectobacterium carotovorum subsp. carotovorum (strain PC1) protein is Ketol-acid reductoisomerase (NADP(+)).